The following is a 1338-amino-acid chain: Thioester-containing protein 1 allele S3 (1338 aa).

Positions 1 to 21 (MWQFIRSRILTVIIFIGAAHG) are cleaved as a signal peptide. Asn-68, Asn-199, Asn-242, Asn-312, and Asn-481 each carry an N-linked (GlcNAc...) asparagine glycan. The interval 580–609 (ENEFDIFHSLGLFARTLDDILFDSANEKTG) is may contain the cleavage site. Residues Asn-637, Asn-728, Asn-813, and Asn-828 are each glycosylated (N-linked (GlcNAc...) asparagine). The segment at residues 859-862 (CGEQ) is a cross-link (isoglutamyl cysteine thioester (Cys-Gln)). Cystine bridges form between Cys-1217-Cys-1283, Cys-1326-Cys-1338, and Cys-1329-Cys-1334.

Heterodimer of a TEP1-N chain and an TEP1-C chain non-covalently linked. Forms a complex composed of TEP1-N and TEP1-C heterodimer, LRIM1 and APL1C; the interaction stabilizes TEP1-N and TEP1-C heterodimer, prevents its binding to tissues while circulating in the hemolymph and protects the thioester bond from hydrolysis. Mature TEP1 and to a lesser extent full-length TEP1 interact with SPCLIP1; the interaction is induced by microbial infection. Post-translationally, in the hemolymph, the full-length protein is cleaved by an unknow protease into a 75kDa N-terminal (TEP1-N) chain and an 80kDa C-terminal (TEP1-C) chain which remain non-covalently linked. The TEP1-C chain contains the thioester bond which covalently binds to the pathogen surface. Cleavage is induced by bacterial infection or aseptic wound injury. During embryonic and pupal development, the cleaved form is the predominant form. In terms of processing, N-glycosylated.

Its subcellular location is the secreted. Plays an essential role in the innate immune response against bacteria, fungi and protozoa infection. After proteolytic cleavage, the protein C-terminus binds covalently through a thioester bond to the pathogen surface resulting in pathogen clearance either by melanization or lysis. Initiate the recruitment and activation of a cascade of proteases, mostly of CLIP-domain serine proteases, which leads to the proteolytic cleavage of the prophenoloxidase (PPO) into active phenoloxidase (PO), the rate-limiting enzyme in melanin biosynthesis. In response to parasite P.berghei-mediated infection, binds to and mediates killing of ookinetes, as they egress from midgut epithelial cells into the basal labyrinth, by both lysis and melanization. During bacterial infection, binds to both Gram-positive and Gram-negative bacteria but only promotes phagocytosis of Gram-negative bacteria. Promotes the accumulation of SPCLIP1 onto the surface of P.berghei ookinetes and bacterium E.coli which leads to the melanization of the pathogen. Recruits CLIPA2 to bacteria surface. In response to bacterial infection, required for periostial hemocyte aggregation, but not for the aggregation of sessile hemocytes in non-periostial regions. During the late stage of fungus B.bassiana-mediated infection, required for the initiation of hyphae melanization by binding to the surface of hyphae and recruiting prophenoloxidase PPO to them. Plays a role in male fertility by binding to defective sperm cells and promoting their removal during spermatogenesis. Functionally, binds to and mediates killing of parasite P.bergei ookinetes by lysis. In terms of biological role, binds covalently through a thioester bond to the pathogen surface resulting in pathogen clearance. This chain is Thioester-containing protein 1 allele S3, found in Anopheles gambiae (African malaria mosquito).